A 525-amino-acid polypeptide reads, in one-letter code: MKCKKPSALFSALALVGALGAASVLGAASANSASPVAAATVQASSGSAKTSVAATSKSQDGDVLAAIVRDLKITKTQAKKRIKLEEKARQLEPRLQKKLGKKFAGLWISKNGKKIVVGVTTKKAAKVVKKAGATPKIVKSNLTTLKKRATKISKNAPSDIKNVNSWWVDPATNKVVIEARSKKAAKAAATAAGLTAGTYEITVSDDVIVPVRDYWGGDALSGCTLAFPVYGGFLTAGHCAVEGKGHILKTEMTGGQIGTVEASQFGDGIDAAWAKNYGDWNGRGRVTHWNGGGGVDIKGSNEAAVGAHMCKSGRTTKWTCGYLLRKDVSVNYGNGHIVTLNETSACALGGDSGGAYVWNDQAQGITSGSNMDTNNCRSFYQPVNTVLNKWKLSLVTSTDVTTSYVQGYQNNCIDVPNSDFTDGKQLQVWNCNGTNAQKVSFHPDGTLRINGKCLDARWAWTHNGTEVQLMNCNGHIAQKFTLNGAGDLVNVHANKCVDVKDWGGQGGKLQLWECSGGANQKWWRR.

Positions 1–32 (MKCKKPSALFSALALVGALGAASVLGAASANS) are cleaved as a signal peptide. The propeptide occupies 33–211 (ASPVAAATVQ…TVSDDVIVPV (179 aa)). Residues cysteine 223 and cysteine 239 are joined by a disulfide bond. Catalysis depends on charge relay system residues histidine 238 and aspartate 270. Cystine bridges form between cysteine 310–cysteine 320, cysteine 346–cysteine 376, cysteine 412–cysteine 431, cysteine 453–cysteine 472, and cysteine 496–cysteine 514. Serine 352 acts as the Charge relay system in catalysis. The Ricin B-type lectin domain maps to 396–525 (TSTDVTTSYV…GGANQKWWRR (130 aa)). The interval 401 to 525 (TTSYVQGYQN…GGANQKWWRR (125 aa)) is essential for the lytic activity, but not for protease function.

This sequence belongs to the peptidase S1 family.

The protein resides in the secreted. Functionally, major serine protease exhibiting lytic activity toward living yeast cells. Similar to elastase in its substrate specificity and has a lectin-like affinity for mannose. Mannoproteins may be the native substrate for RPI. The sequence is that of Serine protease 1 from Rarobacter faecitabidus.